We begin with the raw amino-acid sequence, 339 residues long: Trace amine-associated receptor 2 (339 aa).

Residues 1-36 (MASFEAQQETFDCSEYGNGSCPENERSLGVRAAMYS) are Extracellular-facing. N18 carries N-linked (GlcNAc...) asparagine glycosylation. 2 disulfide bridges follow: C21–C185 and C104–C189. A helical membrane pass occupies residues 37–57 (LMACAIFITIFGNLAMIISIS). The Cytoplasmic segment spans residues 58-67 (YFKQLHTPTN). A helical membrane pass occupies residues 68–88 (LLILSMAVTDFLLGFTIMPYS). The Extracellular portion of the chain corresponds to 89 to 106 (MVRSVENCWYFGLTFCKI). The chain crosses the membrane as a helical span at residues 107-127 (HYSFDLMLSITSIFHLCSVAV). Residues 128–150 (DRFYAICHPLHYCTKMTIPVVRR) lie on the Cytoplasmic side of the membrane. A helical membrane pass occupies residues 151–171 (LLLVCWSVPGAFAFGVVFSEA). Over 172–195 (YADGIEGYDILVACSSSCPVMFNK) the chain is Extracellular. The helical transmembrane segment at 196-216 (LWGTTLFVAGFFTPSSMMVGI) threads the bilayer. Over 217-251 (YGKIFAVSKKHARVIDNLPENQNNQMRKDKKAAKT) the chain is Cytoplasmic. Residues 252 to 272 (LGIVMGVFLLCWFPCFFTILL) form a helical membrane-spanning segment. Residues 273 to 287 (DPFLNFSTPAVLFDA) lie on the Extracellular side of the membrane. Residue N277 is glycosylated (N-linked (GlcNAc...) asparagine). A helical transmembrane segment spans residues 288-310 (LTWFGYFNSTCNPLIYGFFYPWF). Residues 311–339 (RRALKYILLGKIFSSHFHNTNLFTQKETE) lie on the Cytoplasmic side of the membrane.

The protein belongs to the G-protein coupled receptor 1 family. As to expression, mainly expressed in neurons of the olfactory epithelium. Also present in the limbic brain areas receiving projection from the olfactory system and several brain regions, including the hippocampus, cerebellum, cortex, raphe nuclei, hypothalamus and habenula.

It is found in the cell membrane. Functionally, orphan olfactory receptor specific for trace amines. Trace amine compounds are enriched in animal body fluids and act on trace amine-associated receptors (TAARs) to elicit both intraspecific and interspecific innate behaviors. Ligand-binding causes a conformation change that triggers signaling via the G(s)-class of G-proteins which activate adenylate cyclase. May also be required to provide olfactory input into limbic brain areas to regulate emotional behaviors likely via modulation of the dopamine system. This Mus musculus (Mouse) protein is Trace amine-associated receptor 2.